The primary structure comprises 266 residues: Large ribosomal subunit protein eL8 (266 aa).

Residues 1 to 11 are compositionally biased toward basic residues; that stretch reads MPKGKKAKGKK. The disordered stretch occupies residues 1–21; the sequence is MPKGKKAKGKKVAPAPSVAKK.

Belongs to the eukaryotic ribosomal protein eL8 family. Component of the large ribosomal subunit.

It localises to the cytoplasm. Component of the large ribosomal subunit. The ribosome is a large ribonucleoprotein complex responsible for the synthesis of proteins in the cell. This chain is Large ribosomal subunit protein eL8 (rpl7a), found in Ictalurus punctatus (Channel catfish).